Here is a 268-residue protein sequence, read N- to C-terminus: Tryptophan synthase alpha chain (268 aa).

Residues E49 and D60 each act as proton acceptor in the active site.

The protein belongs to the TrpA family. Tetramer of two alpha and two beta chains.

It carries out the reaction (1S,2R)-1-C-(indol-3-yl)glycerol 3-phosphate + L-serine = D-glyceraldehyde 3-phosphate + L-tryptophan + H2O. It functions in the pathway amino-acid biosynthesis; L-tryptophan biosynthesis; L-tryptophan from chorismate: step 5/5. In terms of biological role, the alpha subunit is responsible for the aldol cleavage of indoleglycerol phosphate to indole and glyceraldehyde 3-phosphate. The sequence is that of Tryptophan synthase alpha chain from Escherichia coli O6:H1 (strain CFT073 / ATCC 700928 / UPEC).